A 309-amino-acid polypeptide reads, in one-letter code: MERINHTSSVSEFILLGLSSRPEDQKTLFVLFLIVYLVTITGNLLIILAIRFNPHLQTPMYFFLSFLSLTDICFTTSVVPKMLMNFLSEKKTISYAGCLTQMYFLYALGNSDSCLLAVMAFDRYVAVCDPFHYVTTMSHHHCVLLVAFSCSFPHLHSLLHTLLLNRLTFCDSNVIHHFLCDLSPVLKLSCSSIFVNEIVQMTEAPIVLVTRFLCIAFSYIRILTTVLKIPSTSGKRKAFSTCGFYLTVVTLFYGSIFCVYLQPPSTYAVKDHVATIVYTVLSSMLNPFIYSLRNKDLKQGLRKLMSKRS.

Topologically, residues 1–26 are extracellular; sequence MERINHTSSVSEFILLGLSSRPEDQK. Asparagine 5 carries an N-linked (GlcNAc...) asparagine glycan. The helical transmembrane segment at 27 to 50 threads the bilayer; it reads TLFVLFLIVYLVTITGNLLIILAI. Topologically, residues 51-58 are cytoplasmic; the sequence is RFNPHLQT. A helical membrane pass occupies residues 59 to 80; it reads PMYFFLSFLSLTDICFTTSVVP. At 81-101 the chain is on the extracellular side; it reads KMLMNFLSEKKTISYAGCLTQ. Cysteine 98 and cysteine 190 are disulfide-bonded. A helical membrane pass occupies residues 102–121; the sequence is MYFLYALGNSDSCLLAVMAF. Topologically, residues 122–140 are cytoplasmic; it reads DRYVAVCDPFHYVTTMSHH. Residues 141-159 traverse the membrane as a helical segment; that stretch reads HCVLLVAFSCSFPHLHSLL. Topologically, residues 160-197 are extracellular; it reads HTLLLNRLTFCDSNVIHHFLCDLSPVLKLSCSSIFVNE. Residues 198–220 form a helical membrane-spanning segment; the sequence is IVQMTEAPIVLVTRFLCIAFSYI. Residues 221-237 are Cytoplasmic-facing; it reads RILTTVLKIPSTSGKRK. Residues 238 to 260 traverse the membrane as a helical segment; it reads AFSTCGFYLTVVTLFYGSIFCVY. Residues 261 to 272 lie on the Extracellular side of the membrane; that stretch reads LQPPSTYAVKDH. Residues 273–292 form a helical membrane-spanning segment; that stretch reads VATIVYTVLSSMLNPFIYSL. At 293–309 the chain is on the cytoplasmic side; the sequence is RNKDLKQGLRKLMSKRS.

It belongs to the G-protein coupled receptor 1 family.

The protein resides in the cell membrane. Odorant receptor. The protein is Olfactory receptor 1L8 (OR1L8) of Homo sapiens (Human).